A 273-amino-acid chain; its full sequence is GATA-type zinc finger protein 1 (273 aa).

2 disordered regions span residues 99 to 143 (RDSK…ERVD) and 172 to 201 (SSRSQESPADAVGGPAAHPGGTEAHSAGSE). The segment at 208–232 (CASCRTQRTPLWRDAEDGTPLCNAC) adopts a GATA-type zinc-finger fold.

It is found in the nucleus. Its function is as follows. Transcriptional regulator that plays a key role in germ cell development. Determines the oogenic fate by activating key genes for the oogenic program and meiotic prophase entry. Acts downstream of bone morphogenetic protein (BMP) by regulating expression of genes required for the oogenic programs, which are repressed by Polycomb activities in sexually uncommitted germ cells. Regulates expression of STRA8, a central downstream effector for the meiotic program. Acts independently of retinoic acid (RA). In males, not required for germ-cell sex determination, but required to allow the spermatogonia to efficiently accomplish the meiotic prophase. This chain is GATA-type zinc finger protein 1, found in Homo sapiens (Human).